The following is a 65-amino-acid chain: Small ribosomal subunit protein eS27 (65 aa).

Residues Cys-20, Cys-23, Cys-39, and Cys-42 each contribute to the Zn(2+) site. The C4-type zinc-finger motif lies at 20–42 (CIDCGNEQIVFSHPATRVRCLVC).

It belongs to the eukaryotic ribosomal protein eS27 family. In terms of assembly, part of the 30S ribosomal subunit. Requires Zn(2+) as cofactor.

The chain is Small ribosomal subunit protein eS27 from Pyrococcus horikoshii (strain ATCC 700860 / DSM 12428 / JCM 9974 / NBRC 100139 / OT-3).